A 188-amino-acid polypeptide reads, in one-letter code: MFDIGWSELVVIGVVALVAIGPKELPGVLRMVGQWMGKARKLASEFQGQFQEAMREAEMADLKKSFDEVKEATAGLSTNNMLTKLGSELSEAAAIDKSALDSPPVEPTTPAPPTPETFIEATTHQAVTGEPLAIVSEAQAAGAHTTLPVPAETHALATTDLAPPDLAHPAPAHPEPTNSEPAKDAKAS.

A helical transmembrane segment spans residues 1–21 (MFDIGWSELVVIGVVALVAIG). The interval 147–188 (LPVPAETHALATTDLAPPDLAHPAPAHPEPTNSEPAKDAKAS) is disordered. The span at 160-170 (DLAPPDLAHPA) shows a compositional bias: low complexity.

The protein belongs to the TatB family. The Tat system comprises two distinct complexes: a TatABC complex, containing multiple copies of TatA, TatB and TatC subunits, and a separate TatA complex, containing only TatA subunits. Substrates initially bind to the TatABC complex, which probably triggers association of the separate TatA complex to form the active translocon.

Its subcellular location is the cell inner membrane. Part of the twin-arginine translocation (Tat) system that transports large folded proteins containing a characteristic twin-arginine motif in their signal peptide across membranes. Together with TatC, TatB is part of a receptor directly interacting with Tat signal peptides. TatB may form an oligomeric binding site that transiently accommodates folded Tat precursor proteins before their translocation. This Rhodopseudomonas palustris (strain HaA2) protein is Sec-independent protein translocase protein TatB.